The chain runs to 596 residues: V-type ATP synthase alpha chain (596 aa).

Residue 233 to 240 participates in ATP binding; that stretch reads GPFGAGKT.

This sequence belongs to the ATPase alpha/beta chains family.

It carries out the reaction ATP + H2O + 4 H(+)(in) = ADP + phosphate + 5 H(+)(out). In terms of biological role, produces ATP from ADP in the presence of a proton gradient across the membrane. The V-type alpha chain is a catalytic subunit. This chain is V-type ATP synthase alpha chain, found in Streptococcus sanguinis (strain SK36).